The chain runs to 598 residues: Polypeptide N-acetylgalactosaminyltransferase 17 (598 aa).

Topologically, residues 1–6 are cytoplasmic; sequence MASLRR. The chain crosses the membrane as a helical; Signal-anchor for type II membrane protein span at residues 7-27; that stretch reads VKVLLVLNLIAVAGFVLFLAK. Residues 28–598 lie on the Lumenal side of the membrane; it reads CRPIAVRSGD…QRWTIKNSIK (571 aa). N-linked (GlcNAc...) asparagine glycosylation occurs at Asn-50. 2 disulfides stabilise this stretch: Cys-142-Cys-373 and Cys-364-Cys-443. The catalytic subdomain A stretch occupies residues 151–262; sequence LPQISIIFIF…AGWAEPVLSR (112 aa). Substrate is bound by residues Asp-192 and Arg-223. 3 residues coordinate Mn(2+): Asp-246, His-248, and His-378. Residues 319–381 are catalytic subdomain B; that stretch reads PIRTPAMIGC…PCSRVAHIER (63 aa). Substrate contacts are provided by Arg-381 and Tyr-386. Asn-461 and Asn-486 each carry an N-linked (GlcNAc...) asparagine glycan. The Ricin B-type lectin domain occupies 465 to 594; that stretch reads AYGELRNNKA…SCTGQRWTIK (130 aa). Intrachain disulfides connect Cys-478-Cys-494, Cys-526-Cys-541, and Cys-568-Cys-586.

It belongs to the glycosyltransferase 2 family. GalNAc-T subfamily. Requires Mn(2+) as cofactor. As to expression, highly expressed in brain and heart. Weakly expressed in kidney, liver, lung and spleen.

The protein localises to the golgi apparatus membrane. It carries out the reaction L-seryl-[protein] + UDP-N-acetyl-alpha-D-galactosamine = a 3-O-[N-acetyl-alpha-D-galactosaminyl]-L-seryl-[protein] + UDP + H(+). It catalyses the reaction L-threonyl-[protein] + UDP-N-acetyl-alpha-D-galactosamine = a 3-O-[N-acetyl-alpha-D-galactosaminyl]-L-threonyl-[protein] + UDP + H(+). The protein operates within protein modification; protein glycosylation. May catalyze the initial reaction in O-linked oligosaccharide biosynthesis, the transfer of an N-acetyl-D-galactosamine residue to a serine or threonine residue on the protein receptor. This chain is Polypeptide N-acetylgalactosaminyltransferase 17, found in Homo sapiens (Human).